Reading from the N-terminus, the 467-residue chain is Retinoic acid receptor RXR-alpha (467 aa).

The disordered stretch occupies residues 1–61; the sequence is MDTKHFLPLD…LHSPISTLSS (61 aa). Residues 1–139 are modulating; sequence MDTKHFLPLD…GNMSSFTKHI (139 aa). Residue K4 forms a Glycyl lysine isopeptide (Lys-Gly) (interchain with G-Cter in SUMO2) linkage. A phosphoserine mark is found at S22 and S28. Low complexity predominate over residues 32–55; it reads PSLHPSLGPGLGSPLGSPGQLHSP. Phosphoserine; by MAPK8 and MAPK9 occurs at positions 61 and 75. The disordered stretch occupies residues 79 to 109; that stretch reads PHSMSVPTTPTLGFETGSPQLNSPMNPVSSS. Residues 83 to 109 show a composition bias toward polar residues; it reads SVPTTPTLGFETGSPQLNSPMNPVSSS. T87 is modified (phosphothreonine; by MAPK8 and MAPK9). A Glycyl lysine isopeptide (Lys-Gly) (interchain with G-Cter in SUMO) cross-link involves residue K113. S134 carries the post-translational modification Phosphoserine. Zn(2+) is bound by residues C140 and C143. Residues 140-160 form an NR C4-type zinc finger; it reads CAICGDRSSGKHYGVYSCEGC. Residues 140–205 constitute a DNA-binding region (nuclear receptor); the sequence is CAICGDRSSG…RYQKCLAMGM (66 aa). Position 150 is an N6-acetyllysine (K150). Residues C157 and C160 each coordinate Zn(2+). Residues 165–170 are nuclear localization signal; that stretch reads KRTVRK. Zn(2+)-binding residues include C176, C182, C192, and C195. An NR C4-type zinc finger spans residues 176–200; sequence CRDNKDCLIDKRQRNRCQYCRYQKC. Residues 206–229 form a hinge region; that stretch reads KREAVQEERQRGKDRNENEVESTS. Residues 211 to 223 are compositionally biased toward basic and acidic residues; sequence QEERQRGKDRNEN. A disordered region spans residues 211-233; the sequence is QEERQRGKDRNENEVESTSSANE. Residues 232–463 form the NR LBD domain; that stretch reads NEDMPVEKIL…TFLMEMLEAP (232 aa). S264 is modified (phosphoserine). S265 is subject to Phosphoserine; by MAPK8 and MAPK9. The 9-cis-retinoate site is built by R321 and A332. All-trans-retinoate contacts are provided by R321 and A332. Residues 353–373 are required for nuclear export; that stretch reads RVLTELVSKMRDMQMDKTELG.

The protein belongs to the nuclear hormone receptor family. NR2 subfamily. In terms of assembly, homodimer. Heterodimer (via C-terminus) with RARA; required for ligand-dependent retinoic acid receptor transcriptional activity; association with RARA is enhanced by pulsatile shear stress. Heterodimer with PPARA (via the leucine-like zipper in the LBD); the interaction is required for PPARA transcriptional activity. Heterodimerizes with PPARG. Heterodimerizes (via NR LBD) with RARB. Heterodimerizes with NR1H4; the heterodimerization enhances the binding affinity for LXXLL motifs from coactivators. Interacts with NCOA3 and NCOA6 coactivators. Interacts with FAM120B. Interacts with coactivator PELP1, SENP6, SFPQ, DNTTIP2 and RNF8. Interacts with PRMT2. Interacts with ASXL1. Interacts with BHLHE40/DEC1, BHLHE41/DEC2, MED1, NCOR1 and NCOR2. Interacts in a ligand-dependent fashion with MED1 and NCOA1. Interacts with VDR. Interacts with EP300; the interaction is decreased by 9-cis retinoic acid. Heterodimer (via C-terminus) with NR4A1 (DNA-binding domain); the interaction is enhanced by 9-cis retinoic acid. NR4A1 competes with EP300 for interaction with RXRA and thereby attenuates EP300 mediated acetylation of RXRA. In the absence of hormonal ligand, interacts with TACC1. Interacts ith IGFBP3. Post-translationally, phosphorylated on serine and threonine residues mainly in the N-terminal modulating domain. Constitutively phosphorylated on Ser-22 in the presence or absence of ligand. Under stress conditions, hyperphosphorylated by activated JNK on Ser-61, Ser-75, Thr-87 and Ser-265. Phosphorylated on Ser-28, in vitro, by PKA. This phosphorylation is required for repression of cAMP-mediated transcriptional activity of RARA. In terms of processing, ubiquitinated by UBR5, leading to its degradation: UBR5 specifically recognizes and binds ligand-bound RXRA when it is not associated with coactivators (NCOAs). In presence of NCOAs, the UBR5-degron is not accessible, preventing its ubiquitination and degradation. Sumoylation negatively regulates transcriptional activity. Desumoylated specifically by SENP6. Post-translationally, acetylated by EP300; acetylation enhances DNA binding and transcriptional activity. As to expression, expressed in the adrenal gland with main expression in the zona fasciculata and medulla (at protein level). Expressed in aortic endothelial cells, with high expression in the descending thoracic aorta and the outer curvature of the aortic arch, where pulsatory shear stress exists, but very low in the inner curvature of the aortic arch, where oscillatory shear stress prevails (at protein level).

Its subcellular location is the nucleus. The protein resides in the cytoplasm. It localises to the mitochondrion. Functionally, receptor for retinoic acid that acts as a transcription factor. Forms homo- or heterodimers with retinoic acid receptors (RARs) and binds to target response elements in response to their ligands, all-trans or 9-cis retinoic acid, to regulate gene expression in various biological processes. The RAR/RXR heterodimers bind to the retinoic acid response elements (RARE) composed of tandem 5'-AGGTCA-3' sites known as DR1-DR5 to regulate transcription. The high affinity ligand for retinoid X receptors (RXRs) is 9-cis retinoic acid. In the absence of ligand, the RXR-RAR heterodimers associate with a multiprotein complex containing transcription corepressors that induce histone deacetylation, chromatin condensation and transcriptional suppression. On ligand binding, the corepressors dissociate from the receptors and coactivators are recruited leading to transcriptional activation. Serves as a common heterodimeric partner for a number of nuclear receptors, such as RARA, RARB and PPARA. The RXRA/RARB heterodimer can act as a transcriptional repressor or transcriptional activator, depending on the RARE DNA element context. The RXRA/PPARA heterodimer is required for PPARA transcriptional activity on fatty acid oxidation genes such as ACOX1 and the P450 system genes. Together with RARA, positively regulates microRNA-10a expression, thereby inhibiting the GATA6/VCAM1 signaling response to pulsatile shear stress in vascular endothelial cells. Acts as an enhancer of RARA binding to RARE DNA element. May facilitate the nuclear import of heterodimerization partners such as VDR and NR4A1. Promotes myelin debris phagocytosis and remyelination by macrophages. Plays a role in the attenuation of the innate immune system in response to viral infections, possibly by negatively regulating the transcription of antiviral genes such as type I IFN genes. Involved in the regulation of calcium signaling by repressing ITPR2 gene expression, thereby controlling cellular senescence. This Rattus norvegicus (Rat) protein is Retinoic acid receptor RXR-alpha (Rxra).